Consider the following 203-residue polypeptide: Thymidylate kinase (203 aa).

G14 to S21 serves as a coordination point for ATP.

The protein belongs to the thymidylate kinase family.

The enzyme catalyses dTMP + ATP = dTDP + ADP. In terms of biological role, phosphorylation of dTMP to form dTDP in both de novo and salvage pathways of dTTP synthesis. This is Thymidylate kinase from Rickettsia peacockii (strain Rustic).